The chain runs to 172 residues: Adenine phosphoribosyltransferase (172 aa).

Belongs to the purine/pyrimidine phosphoribosyltransferase family. Homodimer.

It localises to the cytoplasm. It catalyses the reaction AMP + diphosphate = 5-phospho-alpha-D-ribose 1-diphosphate + adenine. The protein operates within purine metabolism; AMP biosynthesis via salvage pathway; AMP from adenine: step 1/1. In terms of biological role, catalyzes a salvage reaction resulting in the formation of AMP, that is energically less costly than de novo synthesis. In Staphylococcus aureus (strain bovine RF122 / ET3-1), this protein is Adenine phosphoribosyltransferase.